We begin with the raw amino-acid sequence, 273 residues long: Ribosomal RNA small subunit methyltransferase A (273 aa).

Residues Asn-18, Leu-20, Gly-45, Glu-66, Asp-91, and Asn-113 each contribute to the S-adenosyl-L-methionine site.

The protein belongs to the class I-like SAM-binding methyltransferase superfamily. rRNA adenine N(6)-methyltransferase family. RsmA subfamily.

The protein localises to the cytoplasm. The enzyme catalyses adenosine(1518)/adenosine(1519) in 16S rRNA + 4 S-adenosyl-L-methionine = N(6)-dimethyladenosine(1518)/N(6)-dimethyladenosine(1519) in 16S rRNA + 4 S-adenosyl-L-homocysteine + 4 H(+). In terms of biological role, specifically dimethylates two adjacent adenosines (A1518 and A1519) in the loop of a conserved hairpin near the 3'-end of 16S rRNA in the 30S particle. May play a critical role in biogenesis of 30S subunits. This is Ribosomal RNA small subunit methyltransferase A from Klebsiella pneumoniae (strain 342).